Here is an 856-residue protein sequence, read N- to C-terminus: Glucans biosynthesis glucosyltransferase H (856 aa).

The next 6 helical transmembrane spans lie at Ile-144–Met-164, Ile-198–Met-218, Val-517–Leu-537, Leu-574–Trp-594, Thr-608–Phe-628, and Phe-684–Ile-704.

It belongs to the glycosyltransferase 2 family. OpgH subfamily.

The protein resides in the cell inner membrane. It participates in glycan metabolism; osmoregulated periplasmic glucan (OPG) biosynthesis. Its function is as follows. Involved in the biosynthesis of osmoregulated periplasmic glucans (OPGs). This chain is Glucans biosynthesis glucosyltransferase H, found in Pseudomonas fluorescens (strain ATCC BAA-477 / NRRL B-23932 / Pf-5).